A 140-amino-acid polypeptide reads, in one-letter code: Large ribosomal subunit protein bL19 (140 aa).

Residues 113-126 (RIAERQDRTADGKI) show a composition bias toward basic and acidic residues. Residues 113–140 (RIAERQDRTADGKIKKGGKSAPAPTAAE) form a disordered region.

This sequence belongs to the bacterial ribosomal protein bL19 family.

In terms of biological role, this protein is located at the 30S-50S ribosomal subunit interface and may play a role in the structure and function of the aminoacyl-tRNA binding site. The protein is Large ribosomal subunit protein bL19 of Xanthobacter autotrophicus (strain ATCC BAA-1158 / Py2).